The sequence spans 124 residues: UPF0102 protein HCH_05895 (124 aa).

Belongs to the UPF0102 family.

This is UPF0102 protein HCH_05895 from Hahella chejuensis (strain KCTC 2396).